A 320-amino-acid polypeptide reads, in one-letter code: o-succinylbenzoate synthase (320 aa).

Lys-133 serves as the catalytic Proton donor. Residues Asp-161, Glu-190, and Asp-213 each coordinate Mg(2+). Residue Lys-235 is the Proton acceptor of the active site.

The protein belongs to the mandelate racemase/muconate lactonizing enzyme family. MenC type 1 subfamily. A divalent metal cation is required as a cofactor.

The catalysed reaction is (1R,6R)-6-hydroxy-2-succinyl-cyclohexa-2,4-diene-1-carboxylate = 2-succinylbenzoate + H2O. The protein operates within quinol/quinone metabolism; 1,4-dihydroxy-2-naphthoate biosynthesis; 1,4-dihydroxy-2-naphthoate from chorismate: step 4/7. It participates in quinol/quinone metabolism; menaquinone biosynthesis. Functionally, converts 2-succinyl-6-hydroxy-2,4-cyclohexadiene-1-carboxylate (SHCHC) to 2-succinylbenzoate (OSB). The chain is o-succinylbenzoate synthase from Escherichia coli O139:H28 (strain E24377A / ETEC).